The primary structure comprises 421 residues: Isocitrate dehydrogenase [NADP], mitochondrial (421 aa).

A mitochondrion-targeting transit peptide spans 1 to 8; the sequence is ARAAARHY. 4 positions are modified to N6-acetyllysine: lysine 14, lysine 17, lysine 36, and lysine 38. N6-acetyllysine; alternate occurs at positions 49 and 75. N6-succinyllysine; alternate occurs at positions 49 and 75. NADP(+) is bound by residues 84 to 86 and arginine 91; that span reads TIT. Threonine 86 provides a ligand contact to D-threo-isocitrate. D-threo-isocitrate is bound by residues 103–109 and arginine 118; that span reads SPNGTIR. Lysine 124 carries the N6-acetyllysine modification. Lysine 135 is subject to N6-acetyllysine; alternate. N6-succinyllysine; alternate is present on lysine 135. Position 141 (arginine 141) interacts with D-threo-isocitrate. N6-acetyllysine; alternate occurs at positions 149 and 162. N6-succinyllysine; alternate is present on residues lysine 149 and lysine 162. Lysine 168 is modified (N6-acetyllysine). Lysine 225 carries the post-translational modification N6-acetyllysine; alternate. Residue lysine 225 is modified to N6-succinyllysine; alternate. 4 positions are modified to N6-acetyllysine: lysine 232, lysine 241, lysine 244, and lysine 249. Lysine 251 is modified (N6-acetyllysine; alternate). The residue at position 251 (lysine 251) is an N6-succinyllysine; alternate. A Mn(2+)-binding site is contributed by aspartate 260. Lysine 268 lines the NADP(+) pocket. Residue aspartate 283 coordinates Mn(2+). Residues 318 to 323 and asparagine 336 contribute to the NADP(+) site; that span reads GTVTRH. The residue at position 353 (lysine 353) is an N6-acetyllysine; alternate. An N6-succinyllysine; alternate modification is found at lysine 353. N6-acetyllysine occurs at positions 369, 382, and 411.

It belongs to the isocitrate and isopropylmalate dehydrogenases family. Homodimer. The cofactor is Mg(2+). Requires Mn(2+) as cofactor. Acetylation at Lys-382 dramatically reduces catalytic activity. Deacetylated by SIRT3.

It localises to the mitochondrion. It carries out the reaction D-threo-isocitrate + NADP(+) = 2-oxoglutarate + CO2 + NADPH. Its function is as follows. Plays a role in intermediary metabolism and energy production. It may tightly associate or interact with the pyruvate dehydrogenase complex. This Sus scrofa (Pig) protein is Isocitrate dehydrogenase [NADP], mitochondrial (IDH2).